The primary structure comprises 307 residues: Pantothenate kinase (307 aa).

Residue 90-97 (GSVAVGKS) participates in ATP binding.

Belongs to the prokaryotic pantothenate kinase family.

It is found in the cytoplasm. The enzyme catalyses (R)-pantothenate + ATP = (R)-4'-phosphopantothenate + ADP + H(+). Its pathway is cofactor biosynthesis; coenzyme A biosynthesis; CoA from (R)-pantothenate: step 1/5. In Levilactobacillus brevis (strain ATCC 367 / BCRC 12310 / CIP 105137 / JCM 1170 / LMG 11437 / NCIMB 947 / NCTC 947) (Lactobacillus brevis), this protein is Pantothenate kinase.